The primary structure comprises 437 residues: MTDTIFAPASGFGRAAVAVIRISGPGAASCLTALTGHPPPLPRRLSLRQLRDPGTGEVLDRALVVWLPGPATFTGEDSAELHLHGGAAVRAAVLRVLGRLPGLAPAEPGAFTRRAFLNGRMDLTAVEGLADLIDAETEAQRRQAMRQLDGALGRLVEAWRDTLLGVLAGAEAALDFSDEGDVDESALSASGLAAAARVRDAILAALAEGRRGERLREGFVVVLAGPPNAGKSTLLNALARREAAIVSPIPGTTRDAIEVRCDLDGLPVLLVDTAGLRDEGADPIEAEGMARSRRRIEEADLVLWLVPPEGGAAAPKGALVVHTKRDLGRDPGGGVDGALAISALTGEGLAMLLDRVAAAAGAALGRGDAVVTRERQRRALEECAAHLGRAIAGAETMPAELVAEDLRLAVRALGAVAGRVGVEEMLDRLFSSFCIGK.

Residues arginine 21, glutamate 80, and arginine 120 each contribute to the (6S)-5-formyl-5,6,7,8-tetrahydrofolate site. The 144-residue stretch at 218-361 (GFVVVLAGPP…LLDRVAAAAG (144 aa)) folds into the TrmE-type G domain. Asparagine 228 is a binding site for K(+). Residues 228–233 (NAGKST), 247–253 (SPIPGTT), and 272–275 (DTAG) contribute to the GTP site. Serine 232 serves as a coordination point for Mg(2+). 3 residues coordinate K(+): serine 247, isoleucine 249, and threonine 252. Position 253 (threonine 253) interacts with Mg(2+). (6S)-5-formyl-5,6,7,8-tetrahydrofolate is bound at residue lysine 437.

It belongs to the TRAFAC class TrmE-Era-EngA-EngB-Septin-like GTPase superfamily. TrmE GTPase family. In terms of assembly, homodimer. Heterotetramer of two MnmE and two MnmG subunits. K(+) serves as cofactor.

The protein localises to the cytoplasm. Exhibits a very high intrinsic GTPase hydrolysis rate. Involved in the addition of a carboxymethylaminomethyl (cmnm) group at the wobble position (U34) of certain tRNAs, forming tRNA-cmnm(5)s(2)U34. The chain is tRNA modification GTPase MnmE from Methylobacterium sp. (strain 4-46).